The primary structure comprises 176 residues: ATP-dependent protease subunit HslV (176 aa).

Residue threonine 2 is part of the active site. Residues glycine 157, cysteine 160, and threonine 163 each coordinate Na(+).

This sequence belongs to the peptidase T1B family. HslV subfamily. A double ring-shaped homohexamer of HslV is capped on each side by a ring-shaped HslU homohexamer. The assembly of the HslU/HslV complex is dependent on binding of ATP.

Its subcellular location is the cytoplasm. It carries out the reaction ATP-dependent cleavage of peptide bonds with broad specificity.. Allosterically activated by HslU binding. In terms of biological role, protease subunit of a proteasome-like degradation complex believed to be a general protein degrading machinery. The protein is ATP-dependent protease subunit HslV of Pseudomonas putida (strain ATCC 47054 / DSM 6125 / CFBP 8728 / NCIMB 11950 / KT2440).